Reading from the N-terminus, the 622-residue chain is Low affinity potassium transport system protein Kup (622 aa).

12 helical membrane-spanning segments follow: residues 12-32 (ITLAAIGVVYGDIGTSPLYTL), 49-69 (VFGFLSLIFWLLIFVVSIKYL), 103-123 (VIMGLIGGSFFYGEVVITPAI), 137-157 (PQLDTWIVPLSIIVLTLLFMI), 165-185 (VGKLFAPIMLTWFLILAVLGL), 213-233 (VSFIALGAVVLSITGVEALYA), 247-267 (WFTVVLPSLVLNYFGQGALLL), 276-296 (PFFLLAPDWALIPLLILAALA), 337-357 (IYIPFVNWLLYFAVVVVIVSF), 363-383 (LAAAYGIAVTGTMVLTSILST), 396-416 (FVALILIAFLCVDIPLFSANL), and 419-439 (LLSGGWLPLSLGLIMFTIMTT).

It belongs to the HAK/KUP transporter (TC 2.A.72) family.

The protein resides in the cell inner membrane. It carries out the reaction K(+)(in) + H(+)(in) = K(+)(out) + H(+)(out). Functionally, responsible for the low-affinity transport of potassium into the cell. Likely operates as a K(+):H(+) symporter. The chain is Low affinity potassium transport system protein Kup from Salmonella gallinarum (strain 287/91 / NCTC 13346).